Reading from the N-terminus, the 400-residue chain is Enoyl-[acyl-carrier-protein] reductase [NADH] (400 aa).

NAD(+)-binding positions include 48 to 53 (GSSSGY), 74 to 75 (FE), 111 to 112 (DA), and 139 to 140 (LA). Tyrosine 225 provides a ligand contact to substrate. Tyrosine 235 (proton donor) is an active-site residue. NAD(+) contacts are provided by residues lysine 244 and 273 to 275 (VVT).

It belongs to the TER reductase family. As to quaternary structure, monomer.

The enzyme catalyses a 2,3-saturated acyl-[ACP] + NAD(+) = a (2E)-enoyl-[ACP] + NADH + H(+). The protein operates within lipid metabolism; fatty acid biosynthesis. Its function is as follows. Involved in the final reduction of the elongation cycle of fatty acid synthesis (FAS II). Catalyzes the reduction of a carbon-carbon double bond in an enoyl moiety that is covalently linked to an acyl carrier protein (ACP). This is Enoyl-[acyl-carrier-protein] reductase [NADH] from Shewanella baltica (strain OS223).